A 231-amino-acid polypeptide reads, in one-letter code: 5'-methylthioadenosine/S-adenosylhomocysteine nucleosidase (231 aa).

Glutamate 12 serves as the catalytic Proton acceptor. Residues glycine 78, valine 153, and 174 to 175 (ME) each bind substrate. Aspartate 198 (proton donor) is an active-site residue.

Belongs to the PNP/UDP phosphorylase family. MtnN subfamily.

The catalysed reaction is S-adenosyl-L-homocysteine + H2O = S-(5-deoxy-D-ribos-5-yl)-L-homocysteine + adenine. It carries out the reaction S-methyl-5'-thioadenosine + H2O = 5-(methylsulfanyl)-D-ribose + adenine. It catalyses the reaction 5'-deoxyadenosine + H2O = 5-deoxy-D-ribose + adenine. It functions in the pathway amino-acid biosynthesis; L-methionine biosynthesis via salvage pathway; S-methyl-5-thio-alpha-D-ribose 1-phosphate from S-methyl-5'-thioadenosine (hydrolase route): step 1/2. Catalyzes the irreversible cleavage of the glycosidic bond in both 5'-methylthioadenosine (MTA) and S-adenosylhomocysteine (SAH/AdoHcy) to adenine and the corresponding thioribose, 5'-methylthioribose and S-ribosylhomocysteine, respectively. Also cleaves 5'-deoxyadenosine, a toxic by-product of radical S-adenosylmethionine (SAM) enzymes, into 5-deoxyribose and adenine. The polypeptide is 5'-methylthioadenosine/S-adenosylhomocysteine nucleosidase (Aliivibrio fischeri (Vibrio fischeri)).